The following is a 124-amino-acid chain: Small ribosomal subunit protein uS12 (124 aa).

A 3-methylthioaspartic acid modification is found at aspartate 89.

The protein belongs to the universal ribosomal protein uS12 family. As to quaternary structure, part of the 30S ribosomal subunit. Contacts proteins S8 and S17. May interact with IF1 in the 30S initiation complex.

Its function is as follows. With S4 and S5 plays an important role in translational accuracy. Functionally, interacts with and stabilizes bases of the 16S rRNA that are involved in tRNA selection in the A site and with the mRNA backbone. Located at the interface of the 30S and 50S subunits, it traverses the body of the 30S subunit contacting proteins on the other side and probably holding the rRNA structure together. The combined cluster of proteins S8, S12 and S17 appears to hold together the shoulder and platform of the 30S subunit. This Aliivibrio fischeri (strain ATCC 700601 / ES114) (Vibrio fischeri) protein is Small ribosomal subunit protein uS12.